The primary structure comprises 326 residues: Pyruvate dehydrogenase E1 component subunit beta (326 aa).

Glu59 is a binding site for thiamine diphosphate.

Heterodimer of an alpha and a beta chain. It depends on thiamine diphosphate as a cofactor.

The enzyme catalyses N(6)-[(R)-lipoyl]-L-lysyl-[protein] + pyruvate + H(+) = N(6)-[(R)-S(8)-acetyldihydrolipoyl]-L-lysyl-[protein] + CO2. In terms of biological role, the pyruvate dehydrogenase complex catalyzes the overall conversion of pyruvate to acetyl-CoA and CO(2). It contains multiple copies of three enzymatic components: pyruvate dehydrogenase (E1), dihydrolipoamide acetyltransferase (E2) and lipoamide dehydrogenase (E3). The sequence is that of Pyruvate dehydrogenase E1 component subunit beta (pdhB) from Rickettsia conorii (strain ATCC VR-613 / Malish 7).